The sequence spans 107 residues: Metallothionein-1 (107 aa).

Positions 1–2 (MD) are excised as a propeptide.

Belongs to the metallothionein superfamily. Type 7 family.

In terms of biological role, the metallothioneins are involved in the cellular sequestration of toxic metal ions. Binds 12 cadmium ions per molecule. This chain is Metallothionein-1, found in Tetrahymena pyriformis.